The primary structure comprises 706 residues: Zinc transporter foi (706 aa).

The N-terminal stretch at 1 to 21 (MARHIMAVCVVCLLCAHRLHC) is a signal peptide. The Extracellular segment spans residues 22 to 261 (QDHIESLLGP…EKDKDIFYVW (240 aa)). Over residues 40–56 (QDQLNARVYTNLSPSSE) the composition is skewed to polar residues. A disordered region spans residues 40–101 (QDQLNARVYT…HGPTSESRVP (62 aa)). N-linked (GlcNAc...) asparagine glycosylation is found at Asn-74, Asn-119, Asn-176, Asn-182, Asn-196, and Asn-207. A helical transmembrane segment spans residues 262–282 (IYAFISVFACGILGLVGVAII). At 283–292 (PFMGSRYYKY) the chain is on the cytoplasmic side. A helical membrane pass occupies residues 293 to 313 (IIQYLVALAVGTMTGDALLHL). Residues 314–329 (LPHSLAGQDERGMIMK) lie on the Extracellular side of the membrane. A helical transmembrane segment spans residues 330-350 (GLGCLGGIIFFYVMEHALTMI). Residues 351 to 604 (SEWRKSVEKK…LIKAGMSVKS (254 aa)) are Cytoplasmic-facing. Ser-376, Ser-377, and Ser-381 each carry phosphoserine. The helical transmembrane segment at 605 to 625 (AVYYNLLTGVLSFIGMIFGIA) threads the bilayer. The Extracellular portion of the chain corresponds to 626–631 (FGQSQD). Residues 632 to 652 (VAQWMFAVAAGLFIYIALVDM) traverse the membrane as a helical segment. Residues 653 to 665 (MPEISASHKSLGQ) are Cytoplasmic-facing. Residues 666 to 686 (FLLQILGMLSGVGIMLLIALY) traverse the membrane as a helical segment. Over 687–706 (EGDLMSAFGTAGAASHQHAH) the chain is Extracellular.

It belongs to the ZIP transporter (TC 2.A.5) family. Glycosylated. As to expression, maternal foi has almost completely disappeared by embryonic stage 3 except in the pole cells. In stage 6 embryos, expression is enriched in the invaginating mesoderm. In stage 9 embryos, high levels in the anterior and posterior midgut primordia. In stage 14 embryos, broad expression with low levels in the epidermis.

Its subcellular location is the cell membrane. Functionally, required for the normal migration of longitudinal and peripheral glial cells. During larval development, required for the migration of the subretinal glia into the eye disk. During embryonic development, also controls the migration of muscle cells toward their attachment sites. Required in the mesoderm for the correct morphogenesis of embryonic gonad and for tracheal branch fusion during tracheal development. Shg may be cooperating with foi to mediate a common mechanism for gonad and tracheal morphogenesis. Acts as a zinc transporter in both yeast and mammalian cells. The sequence is that of Zinc transporter foi from Drosophila melanogaster (Fruit fly).